A 156-amino-acid chain; its full sequence is Aspartate carbamoyltransferase regulatory chain (156 aa).

Zn(2+)-binding residues include cysteine 109, cysteine 114, cysteine 138, and cysteine 141.

The protein belongs to the PyrI family. In terms of assembly, contains catalytic and regulatory chains. The cofactor is Zn(2+).

In terms of biological role, involved in allosteric regulation of aspartate carbamoyltransferase. In Baumannia cicadellinicola subsp. Homalodisca coagulata, this protein is Aspartate carbamoyltransferase regulatory chain.